The following is a 729-amino-acid chain: Fatty acid oxidation complex subunit alpha (729 aa).

The segment at 1–189 (MLYKGDTLYL…KIGLVDGVVK (189 aa)) is enoyl-CoA hydratase/isomerase. Residue D296 coordinates substrate. Residues 311-729 (ETPKQAAVLG…ARPVGDLKTA (419 aa)) are 3-hydroxyacyl-CoA dehydrogenase. NAD(+)-binding positions include M324, D343, 400-402 (VVE), K407, and S429. Residue H450 is the For 3-hydroxyacyl-CoA dehydrogenase activity of the active site. An NAD(+)-binding site is contributed by N453. N500 and Y660 together coordinate substrate. Residues 708–729 (RHNEPYYPPVEPARPVGDLKTA) form a disordered region.

This sequence in the N-terminal section; belongs to the enoyl-CoA hydratase/isomerase family. In the C-terminal section; belongs to the 3-hydroxyacyl-CoA dehydrogenase family. Heterotetramer of two alpha chains (FadB) and two beta chains (FadA).

It carries out the reaction a (3S)-3-hydroxyacyl-CoA + NAD(+) = a 3-oxoacyl-CoA + NADH + H(+). It catalyses the reaction a (3S)-3-hydroxyacyl-CoA = a (2E)-enoyl-CoA + H2O. The catalysed reaction is a 4-saturated-(3S)-3-hydroxyacyl-CoA = a (3E)-enoyl-CoA + H2O. The enzyme catalyses (3S)-3-hydroxybutanoyl-CoA = (3R)-3-hydroxybutanoyl-CoA. It carries out the reaction a (3Z)-enoyl-CoA = a 4-saturated (2E)-enoyl-CoA. It catalyses the reaction a (3E)-enoyl-CoA = a 4-saturated (2E)-enoyl-CoA. It functions in the pathway lipid metabolism; fatty acid beta-oxidation. Involved in the aerobic and anaerobic degradation of long-chain fatty acids via beta-oxidation cycle. Catalyzes the formation of 3-oxoacyl-CoA from enoyl-CoA via L-3-hydroxyacyl-CoA. It can also use D-3-hydroxyacyl-CoA and cis-3-enoyl-CoA as substrate. The protein is Fatty acid oxidation complex subunit alpha of Citrobacter koseri (strain ATCC BAA-895 / CDC 4225-83 / SGSC4696).